Here is an 87-residue protein sequence, read N- to C-terminus: Small ribosomal subunit protein bS20 (87 aa).

Over residues 1 to 11 (MANIKSAKKRA) the composition is skewed to basic residues. Residues 1 to 27 (MANIKSAKKRAVQSEKRRQHNASQRSM) are disordered.

The protein belongs to the bacterial ribosomal protein bS20 family.

Functionally, binds directly to 16S ribosomal RNA. This chain is Small ribosomal subunit protein bS20, found in Haemophilus influenzae (strain PittEE).